The chain runs to 363 residues: MIPFLDLRQINMRYQKEIQQAMNRVLESGWYILGGEVDDFERKFASYCGAKYCIGVANGLDALTLIIRAYDIGLGDEVIVPSNTYIASILAISANGATPVLVEPDINTYNIDPLKIEEKITSRTKAIMVVHLYGQSCDMESINLIAKKYNLKVIEDCAQAHGAIYNGKRVGSLGDAAGFSFYPGKNLGALGDGGAITTNDAELAERLNVLRNYGSHKKYENLFKGVNSRLDELQAAILSIKLSYLDDDNQRRREIAAYYLEHIKNPFIHLPTVTDDKAHVWHLFVVRVKEREAFQYYLAEQNIQTLIHYPIPPHKQKAYSEWQQESFPISEQIHSEVVSLPISPVMSREEVERVVEAVNRYGY.

Lys-185 is subject to N6-(pyridoxal phosphate)lysine.

This sequence belongs to the DegT/DnrJ/EryC1 family. Pyridoxal 5'-phosphate serves as cofactor.

It catalyses the reaction dTDP-3-amino-3,6-dideoxy-alpha-D-galactopyranose + 2-oxoglutarate = dTDP-3-dehydro-6-deoxy-alpha-D-galactose + L-glutamate. Its function is as follows. Specifically aminates dTDP-6-deoxy-D-xylohex-3-ulose to form dTDP-D-Fucp3N in the biosynthesis of dTDP-3-acetamido-3,6-dideoxy-alpha-D-galactose, a glycan chain of the S-layer. The chain is dTDP-3-amino-3,6-dideoxy-alpha-D-galactopyranose transaminase (fdtB) from Aneurinibacillus thermoaerophilus.